The chain runs to 267 residues: RWD domain-containing protein 3 (267 aa).

One can recognise an RWD domain in the interval 7–114 (EELSVLAAIF…LWIQQNLRHI (108 aa)). Interaction with UBE2I/UBC9 stretches follow at residues 13–15 (AAI) and 100–102 (VHE).

Isoform 1 and isoform 2 interact with UBE2I/UBC9. Isoform 1 shows a greater interaction with NFKBIA and HIF1A as compared to isoform 2. Isoform 2 interacts with NCOA2 and NR3C1. Isoform 1 and isoform 2 are expressed in glioma tumors (at protein level). Expressed in a wide number of tissues with highest expression in cerebellum, pituitary, heart, kidney, liver, stomach, pancreas, prostate and spleen. Low levels in thalamus, spinal cord, esophagus, thymus, lung and peripheral blood leukocytes. A higher level expression seen in pituitary tumors as compared to the pituitary gland.

Its subcellular location is the nucleus. The protein localises to the cytoplasm. Enhancer of SUMO conjugation. Via its interaction with UBE2I/UBC9, increases SUMO conjugation to proteins by promoting the binding of E1 and E2 enzymes, thioester linkage between SUMO and UBE2I/UBC9 and transfer of SUMO to specific target proteins which include HIF1A, PIAS, NFKBIA, NR3C1 and TOP1. Isoform 1 and isoform 2 positively regulate the NF-kappa-B signaling pathway by enhancing the sumoylation of NF-kappa-B inhibitor alpha (NFKBIA), promoting its stabilization which consequently leads to an increased inhibition of NF-kappa-B transcriptional activity. Isoform 1 and isoform 2 negatively regulate the hypoxia-inducible factor-1 alpha (HIF1A) signaling pathway by increasing the sumoylation of HIF1A, promoting its stabilization, transcriptional activity and the expression of its target gene VEGFA during hypoxia. Isoform 2 promotes the sumoylation and transcriptional activity of the glucocorticoid receptor NR3C1 and enhances the interaction of SUMO1 and NR3C1 with UBE2I/UBC9. Has no effect on ubiquitination. The chain is RWD domain-containing protein 3 (RWDD3) from Homo sapiens (Human).